A 582-amino-acid chain; its full sequence is Zinc finger protein 319 (582 aa).

Positions 1–14 (MSESWQQPPQTQPQ) are enriched in low complexity. Residues 1-39 (MSESWQQPPQTQPQQPQPPQPQHHAEPPPALAEHTLPPG) form a disordered region. The segment at 76–100 (PKCGVCGHDLAHLSSPHEHQCLAGH) adopts a C2H2-type 1 zinc-finger fold. The C2H2-type 2; degenerate zinc finger occupies 104-126 (FQCTQCLKIFHQATDLLEHQCVQ). Lysine 130 participates in a covalent cross-link: Glycyl lysine isopeptide (Lys-Gly) (interchain with G-Cter in SUMO2). The C2H2-type 3 zinc-finger motif lies at 132–154 (FVCGVCKMGFSLLTSLAQHHSSH). Residues 174 to 196 (EPATTAAPSLPAAPAPSTVTPAE) show a composition bias toward low complexity. A disordered region spans residues 174 to 198 (EPATTAAPSLPAAPAPSTVTPAEQA). 3 consecutive C2H2-type zinc fingers follow at residues 202 to 224 (YSCP…ERIH), 230 to 252 (YKCT…KRTH), and 258 to 280 (YKCA…MYAH). Position 281 is a phosphoserine (serine 281). The segment at 287–309 (FRCNVCELHFKESSELLQHPCTP) adopts a C2H2-type 7; degenerate zinc-finger fold. 3 consecutive C2H2-type zinc fingers follow at residues 315 to 337 (FRCG…ERTH), 343 to 365 (FKCD…RRTH), and 371 to 393 (FKCG…QHVH). The C2H2-type 11; degenerate zinc-finger motif lies at 399–421 (FKCPVCQKGFDQSAELLRHKCLP). The segment at 428-450 (FKCPVCNKAYKRASALQKHQLAH) adopts a C2H2-type 12 zinc-finger fold. Residues 458–480 (LRCTLCERRFFSSSEFVQHRCDP) form a C2H2-type 13; degenerate zinc finger. 3 C2H2-type zinc fingers span residues 486-508 (LKCP…RRVH), 514-536 (YKCP…QGVH), and 542-564 (FKCV…SAQH).

This sequence belongs to the krueppel C2H2-type zinc-finger protein family.

Its subcellular location is the nucleus. Its function is as follows. May be involved in transcriptional regulation. The sequence is that of Zinc finger protein 319 (ZNF319) from Homo sapiens (Human).